We begin with the raw amino-acid sequence, 477 residues long: Aspartyl/glutamyl-tRNA(Asn/Gln) amidotransferase subunit B (477 aa).

The protein belongs to the GatB/GatE family. GatB subfamily. As to quaternary structure, heterotrimer of A, B and C subunits.

It carries out the reaction L-glutamyl-tRNA(Gln) + L-glutamine + ATP + H2O = L-glutaminyl-tRNA(Gln) + L-glutamate + ADP + phosphate + H(+). The catalysed reaction is L-aspartyl-tRNA(Asn) + L-glutamine + ATP + H2O = L-asparaginyl-tRNA(Asn) + L-glutamate + ADP + phosphate + 2 H(+). Allows the formation of correctly charged Asn-tRNA(Asn) or Gln-tRNA(Gln) through the transamidation of misacylated Asp-tRNA(Asn) or Glu-tRNA(Gln) in organisms which lack either or both of asparaginyl-tRNA or glutaminyl-tRNA synthetases. The reaction takes place in the presence of glutamine and ATP through an activated phospho-Asp-tRNA(Asn) or phospho-Glu-tRNA(Gln). The protein is Aspartyl/glutamyl-tRNA(Asn/Gln) amidotransferase subunit B of Methylobacillus flagellatus (strain ATCC 51484 / DSM 6875 / VKM B-1610 / KT).